The primary structure comprises 341 residues: Oxidoreductase swnN (341 aa).

This sequence belongs to the NmrA-type oxidoreductase family. Isoflavone reductase subfamily.

It functions in the pathway mycotoxin biosynthesis. In terms of biological role, oxidoreductase; part of the gene cluster that mediates the biosynthesis of swainsonine (SW), a cytotoxic fungal alkaloid and a potential cancer therapy drug. Swainsonine production occurs via a multibranched pathway and is dispensable for fungal colonization of plants and infection of insect hosts. The first step of swainsonine biosynthesis is the production of the precursor pipecolic acid (PA) via conversion of L-lysine (Lys) to 1-piperideine-6-carboxylate (P6C) by the aminotransferase swnA, the latter being further reduced to PA by the reductase swnR. PA can be converted from lysine by both the SW biosynthetic cluster and the unclustered genes such as lysine cyclodeaminase. The PKS-NRPS hybrid synthetase swnK uptakes and condensates PA and malonyl-CoA with and without skipping of the ketoreductase (KR) domain in order to produce 3 intermediates, 1-oxoindolizidine, (1S)-1-hydroxyindolizin, and (1R)-1-hydroxyindolizine; with the transisomer (1S)-1-hydroxyindolizin being predominant. The terminal thioester reductase (TE) domain of swnK is involved in reduction of the thioester bond to release the intermediate aldehydes. The oxidoreductase swnN could contribute to the reduction of 1-oxoindolizidine to (1S)-1-hydroxyindolizin and (1R)-1-hydroxyindolizine, contributing to the major route of SW production. The dioxygenase swnH2 would be responsible for the oxidization of (1R)-1-hydroxyindolizine into (1R,2S)-1,2-dihydroxyindolizine and of (1S)-1-hydroxyindolizin to yield both (1R,2S)-1,2-dihydroxyindolizine and (1S,2S)-1,2-dihydroxyindolizine. The dioxygenase swnH1 then performs the conversion of the 1,2-dihydroxyindolizine epimers to SW. The protein is Oxidoreductase swnN of Metarhizium robertsii (strain ARSEF 23 / ATCC MYA-3075) (Metarhizium anisopliae (strain ARSEF 23)).